Consider the following 82-residue polypeptide: Defensin-like protein 22 (82 aa).

Positions 1–24 (MAGLKVFSFALLLILTFSLIDVEG) are cleaved as a signal peptide. 4 disulfides stabilise this stretch: cysteine 34–cysteine 82, cysteine 44–cysteine 69, cysteine 53–cysteine 78, and cysteine 57–cysteine 80.

Belongs to the DEFL family.

The protein resides in the secreted. The polypeptide is Defensin-like protein 22 (Arabidopsis thaliana (Mouse-ear cress)).